The chain runs to 327 residues: Nuclear apoptosis-inducing factor 1 (327 aa).

Residues methionine 1–lysine 70 form a required for nuclear localization and apoptosis-inducing activity region. The segment covering arginine 87–proline 98 has biased composition (low complexity). Disordered regions lie at residues arginine 87–proline 118 and asparagine 303–glutamine 327. The span at alanine 104–proline 118 shows a compositional bias: gly residues. The span at valine 316–glutamine 327 shows a compositional bias: polar residues.

This sequence belongs to the NAIF1 family. As to quaternary structure, interacts with HARBI1. In terms of tissue distribution, widely expressed.

Its subcellular location is the nucleus. In terms of biological role, induces apoptosis. This chain is Nuclear apoptosis-inducing factor 1 (NAIF1), found in Homo sapiens (Human).